Consider the following 437-residue polypeptide: Ribosomal protein uS12 methylthiotransferase RimO (437 aa).

The region spanning 4–114 is the MTTase N-terminal domain; that stretch reads PRVSFVSLGC…VMAAVHEAAP (111 aa). The [4Fe-4S] cluster site is built by Cys-13, Cys-49, Cys-78, Cys-145, Cys-149, and Cys-152. Positions 131 to 369 constitute a Radical SAM core domain; the sequence is LTPRHYAYLK…MQRQQKISAT (239 aa). A TRAM domain is found at 372–437; that stretch reads AKKVGKRLPV…DAYDLYGSAV (66 aa).

Belongs to the methylthiotransferase family. RimO subfamily. Requires [4Fe-4S] cluster as cofactor.

The protein localises to the cytoplasm. The enzyme catalyses L-aspartate(89)-[ribosomal protein uS12]-hydrogen + (sulfur carrier)-SH + AH2 + 2 S-adenosyl-L-methionine = 3-methylsulfanyl-L-aspartate(89)-[ribosomal protein uS12]-hydrogen + (sulfur carrier)-H + 5'-deoxyadenosine + L-methionine + A + S-adenosyl-L-homocysteine + 2 H(+). Functionally, catalyzes the methylthiolation of an aspartic acid residue of ribosomal protein uS12. The polypeptide is Ribosomal protein uS12 methylthiotransferase RimO (Mesorhizobium japonicum (strain LMG 29417 / CECT 9101 / MAFF 303099) (Mesorhizobium loti (strain MAFF 303099))).